The sequence spans 354 residues: Photosystem II protein D1 2 (354 aa).

Transmembrane regions (helical) follow at residues tyrosine 29 to threonine 46, histidine 118 to leucine 133, and tryptophan 142 to alanine 156. Histidine 118 lines the chlorophyll a pocket. Tyrosine 126 contacts pheophytin a. Positions 170 and 189 each coordinate [CaMn4O5] cluster. Residues phenylalanine 197 to leucine 218 traverse the membrane as a helical segment. A chlorophyll a-binding site is contributed by histidine 198. A quinone contacts are provided by residues histidine 215 and serine 264–phenylalanine 265. Histidine 215 contributes to the Fe cation binding site. Histidine 272 is a Fe cation binding site. A helical transmembrane segment spans residues phenylalanine 274 to leucine 288. Positions 332, 333, 342, and 344 each coordinate [CaMn4O5] cluster. Residues alanine 345 to glycine 354 constitute a propeptide that is removed on maturation.

The protein belongs to the reaction center PufL/M/PsbA/D family. In terms of assembly, PSII is composed of 1 copy each of membrane proteins PsbA, PsbB, PsbC, PsbD, PsbE, PsbF, PsbH, PsbI, PsbJ, PsbK, PsbL, PsbM, PsbT, PsbX, PsbY, PsbZ, Psb30/Ycf12, peripheral proteins PsbO, CyanoQ (PsbQ), PsbU, PsbV and a large number of cofactors. It forms dimeric complexes. Requires The D1/D2 heterodimer binds P680, chlorophylls that are the primary electron donor of PSII, and subsequent electron acceptors. It shares a non-heme iron and each subunit binds pheophytin, quinone, additional chlorophylls, carotenoids and lipids. D1 provides most of the ligands for the Mn4-Ca-O5 cluster of the oxygen-evolving complex (OEC). There is also a Cl(-1) ion associated with D1 and D2, which is required for oxygen evolution. The PSII complex binds additional chlorophylls, carotenoids and specific lipids. as cofactor. In terms of processing, tyr-161 forms a radical intermediate that is referred to as redox-active TyrZ, YZ or Y-Z. Post-translationally, C-terminally processed by CtpA; processing is essential to allow assembly of the oxygen-evolving complex and thus photosynthetic growth.

It localises to the cellular thylakoid membrane. It catalyses the reaction 2 a plastoquinone + 4 hnu + 2 H2O = 2 a plastoquinol + O2. In terms of biological role, photosystem II (PSII) is a light-driven water:plastoquinone oxidoreductase that uses light energy to abstract electrons from H(2)O, generating O(2) and a proton gradient subsequently used for ATP formation. It consists of a core antenna complex that captures photons, and an electron transfer chain that converts photonic excitation into a charge separation. The D1/D2 (PsbA/PsbD) reaction center heterodimer binds P680, the primary electron donor of PSII as well as several subsequent electron acceptors. The protein is Photosystem II protein D1 2 of Synechococcus sp. (strain JA-2-3B'a(2-13)) (Cyanobacteria bacterium Yellowstone B-Prime).